Reading from the N-terminus, the 419-residue chain is 1,4-beta-D-glucan cellobiohydrolase CEL6B (419 aa).

An N-terminal signal peptide occupies residues 1 to 47; sequence MGESFLLLQPASPALSPTPSSLLLGPTITMRADVLIAALATGALVAA. The substrate site is built by Trp-111 and Ser-113. Active-site proton donor residues include Asp-152 and Asp-199. Trp-247 is a substrate binding site. Asn-284 carries an N-linked (GlcNAc...) asparagine glycan. Asn-287 is a substrate binding site. Asn-298 carries an N-linked (GlcNAc...) asparagine glycan. A substrate-binding site is contributed by Trp-347. Asn-364 carries an N-linked (GlcNAc...) asparagine glycan. Substrate contacts are provided by Lys-375 and Glu-379.

It belongs to the glycosyl hydrolase 6 (cellulase B) family. Post-translationally, both N- and O-glycosylated.

Its subcellular location is the secreted. It catalyses the reaction Hydrolysis of (1-&gt;4)-beta-D-glucosidic linkages in cellulose and cellotetraose, releasing cellobiose from the non-reducing ends of the chains.. Functionally, exoglucanase that plays an important function in biomass degradation by catalyzing the hydrolysis of the non-reducing end beta-1,4-glucosidic linkages in cellulose and cellotetraose to release cellobiose. Hydrolyzes crystalline and amorphous cellulose but is inactive on hydroxyethyl cellulose, mannan, galactomannan, xyloglucan, arabinoxylan, arabinan, xylan, and pectin. The chain is 1,4-beta-D-glucan cellobiohydrolase CEL6B from Podospora anserina (strain S / ATCC MYA-4624 / DSM 980 / FGSC 10383) (Pleurage anserina).